Here is a 420-residue protein sequence, read N- to C-terminus: MVEKRIQPLARDAMAYVLAGGRGSRLKELTDRRAKPAVYFGGKARIIDFALSNALNSGIRRIGVATQYKAHSLIRHMQRGWNFFRPERNESFDILPASQRVSETQWYEGTADAVYQNIDIIEDYGVEYMVILAGDHVYKMDYEYMLQQHVDSGADVTIGCLEVPRMEATGFGVMHVNEKDEIFAFIEKPADPPGIPDKPDFALASMGIYVFHTKFLLDALRRDAADPTSSRDFGKDIIPYIVKNGKAVAHRFAKSCVRSDFEHEPYWRDVGTIDAYWQANIDLTAIVPELDIYDKSWPIWTYAEITPPAKFVHDDDDRRGSATSSVVSGDCIISGASLNKSLLFTGVRANSFSKLEGAVILPNVKIGRRAQLKNVVIDHGVVIPEGLVVGEDPDLDAKRFRRTESGICLITQPMIDKLDI.

Residues Tyr107, Gly172, 187–188 (EK), and Ser205 each bind alpha-D-glucose 1-phosphate.

The protein belongs to the bacterial/plant glucose-1-phosphate adenylyltransferase family. As to quaternary structure, homotetramer.

It catalyses the reaction alpha-D-glucose 1-phosphate + ATP + H(+) = ADP-alpha-D-glucose + diphosphate. It participates in glycan biosynthesis; glycogen biosynthesis. In terms of biological role, involved in the biosynthesis of ADP-glucose, a building block required for the elongation reactions to produce glycogen. Catalyzes the reaction between ATP and alpha-D-glucose 1-phosphate (G1P) to produce pyrophosphate and ADP-Glc. This Rhizobium etli (strain ATCC 51251 / DSM 11541 / JCM 21823 / NBRC 15573 / CFN 42) protein is Glucose-1-phosphate adenylyltransferase.